Reading from the N-terminus, the 551-residue chain is Probable malate:quinone oxidoreductase (551 aa).

Positions 525–544 (QTAAAAPQAQPQLKPQPDAK) are enriched in low complexity. A disordered region spans residues 525–551 (QTAAAAPQAQPQLKPQPDAKPVADIAL).

It belongs to the MQO family. The cofactor is FAD.

It catalyses the reaction (S)-malate + a quinone = a quinol + oxaloacetate. The protein operates within carbohydrate metabolism; tricarboxylic acid cycle; oxaloacetate from (S)-malate (quinone route): step 1/1. The sequence is that of Probable malate:quinone oxidoreductase from Enterobacter sp. (strain 638).